A 689-amino-acid chain; its full sequence is Glycine--tRNA ligase beta subunit (689 aa).

Belongs to the class-II aminoacyl-tRNA synthetase family. Tetramer of two alpha and two beta subunits.

The protein resides in the cytoplasm. The catalysed reaction is tRNA(Gly) + glycine + ATP = glycyl-tRNA(Gly) + AMP + diphosphate. The protein is Glycine--tRNA ligase beta subunit of Photobacterium profundum (strain SS9).